A 4699-amino-acid polypeptide reads, in one-letter code: PKS-NRPS hybrid synthetase cheA (4699 aa).

Acidic residues predominate over residues 1 to 21 (MSDNDDEWNGFSDDNGEDDGP). Disordered regions lie at residues 1–38 (MSDN…WDVP) and 136–165 (DGWR…HTQH). The segment covering 136-148 (DGWRFHSHPDPQH) has biased composition (basic and acidic residues). The tract at residues 172–520 (SLDTIAELSN…VQQNVEEMAK (349 aa)) is N-terminal acylcarrier protein transacylase domain (SAT). Residues 625-836 (PLPSVEDNVA…AGAPGARVTR (212 aa)) form a disordered region. Over residues 674–688 (TQGSQGSQGRRTPGS) the composition is skewed to low complexity. Residues 724-737 (PKRRGRPPGSKNKK) are compositionally biased toward basic residues. The 402-residue stretch at 737–1138 (KKDQAPAPAE…GANAHAILEA (402 aa)) folds into the Ketosynthase family 3 (KS3) domain. The span at 764–777 (ASAPRRGLRAAPAA) shows a compositional bias: low complexity. Residues 802–816 (ATASTPRAQSDQGTG) show a composition bias toward polar residues. Catalysis depends on for beta-ketoacyl synthase activity residues C873, H1012, and H1058. Residues 1250 to 1573 (VFTGQGAQWP…VGTLLRQRDA (324 aa)) are malonyl-CoA:ACP transacylase (MAT) domain. Positions 1644–1777 (NELLGTRIMD…ANLIISLGEP (134 aa)) are N-terminal hotdog fold. The region spanning 1644–1947 (NELLGTRIMD…TKPLVPPTPS (304 aa)) is the PKS/mFAS DH domain. Residues 1645–1941 (ELLGTRIMDN…QLQGLHTKPL (297 aa)) are dehydratase (DH) domain. H1676 acts as the Proton acceptor; for dehydratase activity in catalysis. The C-terminal hotdog fold stretch occupies residues 1794 to 1947 (MLDVPAERFY…TKPLVPPTPS (154 aa)). D1854 acts as the Proton donor; for dehydratase activity in catalysis. The segment at 2050–2241 (LNRFYIEALG…RNTGFSGADE (192 aa)) is methyltransferase (MT) domain. The interval 2794–2967 (TYWLVGLTGG…PAAAVNIGAV (174 aa)) is ketoreductase (KR) domain. A Carrier 1 domain is found at 3076–3153 (DASEILEDAY…ALFELVKERA (78 aa)). S3113 is modified (O-(pantetheine 4'-phosphoryl)serine). Residues 3164–3265 (EQPDQVKSPR…PVASSPDAGL (102 aa)) are disordered. Composition is skewed to polar residues over residues 3200–3209 (SLDQGSSWDS) and 3218–3233 (GHDS…SSPI). The interval 3268-3696 (SVPLSFSQAR…PISRISKPPL (429 aa)) is condensation (C) domain. The segment at 3730–4113 (IQAHPDKLAL…GGLILEGRID (384 aa)) is adenylation (A) domain. Positions 4236–4316 (EGLPAMQHLI…TMAALVASGS (81 aa)) constitute a Carrier 2 domain. A thiolation and peptide carrier (T) domain region spans residues 4241–4313 (MQHLIKQLWE…TLETMAALVA (73 aa)). S4276 is modified (O-(pantetheine 4'-phosphoryl)serine). The reductase (R) domain stretch occupies residues 4367-4598 (LTGSTGFLGR…ISVHTVAAAI (232 aa)).

It in the C-terminal section; belongs to the NRP synthetase family.

It functions in the pathway secondary metabolite biosynthesis. PKS-NRPS hybrid synthetase; part of the gene cluster that mediates the biosynthesis of chaetoglobosin A which has a unique inhibitory activity against actin polymerization in mammalian cells. Chaetoglobosin A and its intermediates are involved in the morphological differentiation of C.globosum. The first step of the pathway is the synthesis of prochaetoglobosin I via condensation of one acetyl-CoA, 8 malonyl-CoA, and a L-tryptophan molecule by the PKS-NRPS hybrid synthetase cheA, followed by reduction of backbone double bond to install desired geometry by the enoyl reductase cheB. Further multiple oxidation steps performed by the cytochrome P450 monooxygenases cheE and cheG, as well as by the FAD-linked oxidoreductase cheF, lead to the formation of chaetoglobosin A. Depending on the order of action of these reductases, distinct intermediates can be identified. Within the pathway, the cytochrome P450 monooxygenase cheE catalyzes a stereospecific epoxidation on prochaetoglobosin I, cytoglobosin D, and chaetoglobosin J intermediates. The FAD-linked oxidoreductase cheF performs dehydrogenation of the C-20 hydroxyl groups in the 20-dihyrochaetoglobosin A and cytoglobosin D intermediates. Finally, the cytochrome P450 monooxygenase cheG can catalyze the stereospecific dihydroxylation of prochaetoglobosin I and prochaetoglobosin IV at C-19 and C-20, respectively. The Diels-Alderase cheD may play a role in the post-PKS-NRPS biosynthetic steps catalyzing Diels-Alder cyclization. The polypeptide is PKS-NRPS hybrid synthetase cheA (Chaetomium globosum (strain ATCC 6205 / CBS 148.51 / DSM 1962 / NBRC 6347 / NRRL 1970) (Soil fungus)).